A 409-amino-acid polypeptide reads, in one-letter code: Putative protein disulfide-isomerase DDB_G0275025 (409 aa).

A signal peptide spans 1–21; it reads MKLINICIFIFAIICIESTFG. The Thioredoxin domain occupies 28–140; sequence NVINLTKKNF…AKFSLAKLPS (113 aa). The cysteines at positions 57 and 60 are disulfide-linked. The tract at residues 245–273 is disordered; that stretch reads SNNDNNNNNNNNNNEESTKTTTTEKDPAS. The span at 247–259 shows a compositional bias: low complexity; the sequence is NDNNNNNNNNNNE. Over residues 260–273 the composition is skewed to basic and acidic residues; that stretch reads ESTKTTTTEKDPAS. The Prevents secretion from ER signature appears at 406–409; it reads KDEL.

Belongs to the protein disulfide isomerase family.

It is found in the endoplasmic reticulum lumen. The enzyme catalyses Catalyzes the rearrangement of -S-S- bonds in proteins.. The chain is Putative protein disulfide-isomerase DDB_G0275025 from Dictyostelium discoideum (Social amoeba).